The sequence spans 256 residues: 3-methyl-2-oxobutanoate hydroxymethyltransferase (256 aa).

Positions 42 and 86 each coordinate Mg(2+). 3-methyl-2-oxobutanoate contacts are provided by residues 42-43, aspartate 86, and lysine 116; that span reads DS. Glutamate 118 contacts Mg(2+). The Proton acceptor role is filled by glutamate 185.

This sequence belongs to the PanB family. In terms of assembly, homodecamer; pentamer of dimers. Mg(2+) is required as a cofactor.

It localises to the cytoplasm. The catalysed reaction is 3-methyl-2-oxobutanoate + (6R)-5,10-methylene-5,6,7,8-tetrahydrofolate + H2O = 2-dehydropantoate + (6S)-5,6,7,8-tetrahydrofolate. It participates in cofactor biosynthesis; (R)-pantothenate biosynthesis; (R)-pantoate from 3-methyl-2-oxobutanoate: step 1/2. In terms of biological role, catalyzes the reversible reaction in which hydroxymethyl group from 5,10-methylenetetrahydrofolate is transferred onto alpha-ketoisovalerate to form ketopantoate. The polypeptide is 3-methyl-2-oxobutanoate hydroxymethyltransferase (Prochlorococcus marinus (strain SARG / CCMP1375 / SS120)).